The chain runs to 509 residues: Cytochrome P450 monooxygenase ARMGADRAFT_974139 (509 aa).

Residues 4–24 traverse the membrane as a helical segment; sequence ASLAVVVWAILLVLWLRRIFG. N-linked (GlcNAc...) asparagine glycosylation is found at N96 and N279. C439 lines the heme pocket.

The protein belongs to the cytochrome P450 family. It depends on heme as a cofactor.

It is found in the membrane. It participates in secondary metabolite biosynthesis. Its function is as follows. Cytochrome P450 monooxygenase, part of the gene cluster that mediates the biosynthesis of melleolides, a range of antifungal and phytotoxic polyketide derivatives composed of an orsellinic acid (OA) moiety esterified to various sesquiterpene alcohols. The first step in melleolides biosynthesis is performed by the delta(6)-protoilludene synthase PRO1 which catalyzes the cyclization of farnesyl diphosphate to protoilludene. The orsellinic acid synthase armB produces OA by condensing acetyl-CoA with 3 malonyl-CoA units in a three-round chain elongation reaction folowed by a C2-C7 ring closure. ArmB further catalyzes the trans-esterification of OA to the various sesquiterpene alcohols resulting from the hydroxylation of protoilludene. The melleolides cluster also includes 5 cytochrome P450 monooxygenases, 4 NAD(+)-dependent oxidoreductases, one flavin-dependent oxidoreductase, and one O-methyltransferase. The cytochrome P450 monooxygenases may be involved in protoilludene hydroxylation to elaborate melleolides with multiple alcohol groups, such as melleolide D, which carries alcohol functionalities at C-4, C-5, C-10, and C-13. The role of the NAD(+)-dependent enzymes remains unknown. Numerous melleolides, including arnamial, show 5'-O-methylation of the aromatic moiety which may be catalyzed by the methyltransferase encoded in the cluster. The flavin-dependent oxidoreductase might represent the dehydrogenase yielding the aldehyde in position 1 of arnamial and other melleolides. Finally, several halogenase localized outside of the cluster, are able to catalyze the transfer of a single chlorine atom to the melleolide backbone, resulting in a 6'-chloromelleolide product. The protein is Cytochrome P450 monooxygenase ARMGADRAFT_974139 of Armillaria gallica (Bulbous honey fungus).